The chain runs to 295 residues: MTIIIDGKKIASGLCEKLSQRIDVLKREHSIFPCLKVIFVGNNPASQVYVRNKQKKAESIGISSETIVLPDNILENELIEKINELNNDRFVNGILVQLPLPNHINASKVINTVSVEKDVDAFHRENVGKLVKGEKNCLVPCTPKGALHLIKLVETNLSGKNAVVIGRSNIVGKPMFHLLLQENCTVTILHSQSKDLAEYCSKADVVVTAVGKPNFVQEGWIKEGAIVIDVGINSVSIEGKTKLIGDVDFDRVKEKTKAITPVPGGVGPMTIAFLMINTVIAACLQKKVDASDFVS.

NADP(+)-binding positions include 166-168 (GRS), serine 191, and isoleucine 232.

This sequence belongs to the tetrahydrofolate dehydrogenase/cyclohydrolase family. Homodimer.

The enzyme catalyses (6R)-5,10-methylene-5,6,7,8-tetrahydrofolate + NADP(+) = (6R)-5,10-methenyltetrahydrofolate + NADPH. The catalysed reaction is (6R)-5,10-methenyltetrahydrofolate + H2O = (6R)-10-formyltetrahydrofolate + H(+). Its pathway is one-carbon metabolism; tetrahydrofolate interconversion. Catalyzes the oxidation of 5,10-methylenetetrahydrofolate to 5,10-methenyltetrahydrofolate and then the hydrolysis of 5,10-methenyltetrahydrofolate to 10-formyltetrahydrofolate. The protein is Bifunctional protein FolD of Wolbachia sp. subsp. Brugia malayi (strain TRS).